The primary structure comprises 369 residues: Glutamate 5-kinase (369 aa).

Residue lysine 8 coordinates ATP. Residues serine 49, aspartate 136, and asparagine 148 each contribute to the substrate site. Residues 168 to 169 (TD) and 211 to 217 (TGGMATK) each bind ATP. Residues 276 to 354 (KGELWLDEGA…TELANILGYA (79 aa)) enclose the PUA domain.

This sequence belongs to the glutamate 5-kinase family.

It is found in the cytoplasm. The enzyme catalyses L-glutamate + ATP = L-glutamyl 5-phosphate + ADP. It functions in the pathway amino-acid biosynthesis; L-proline biosynthesis; L-glutamate 5-semialdehyde from L-glutamate: step 1/2. Its function is as follows. Catalyzes the transfer of a phosphate group to glutamate to form L-glutamate 5-phosphate. The sequence is that of Glutamate 5-kinase from Thermosynechococcus vestitus (strain NIES-2133 / IAM M-273 / BP-1).